Here is a 115-residue protein sequence, read N- to C-terminus: MGTRLLCWVVLGFLGTDHTGAGVSQSPRYKVAKRGRDVALRCDSISGHVTLYWYRQTLGQGSEVLTYSQSDAQRDKSGRPSGRFSAERPERSVSTLKIQRTEQGDSAVYLCASSL.

The N-terminal stretch at 1-21 (MGTRLLCWVVLGFLGTDHTGA) is a signal peptide. An Ig-like domain is found at 22-115 (GVSQSPRYKV…SAVYLCASSL (94 aa)). A disulfide bridge links Cys42 with Cys111. Positions 67–97 (YSQSDAQRDKSGRPSGRFSAERPERSVSTLK) are disordered.

In terms of assembly, alpha-beta TR is a heterodimer composed of an alpha and beta chain; disulfide-linked. The alpha-beta TR is associated with the transmembrane signaling CD3 coreceptor proteins to form the TR-CD3 (TcR or TCR). The assembly of alpha-beta TR heterodimers with CD3 occurs in the endoplasmic reticulum where a single alpha-beta TR heterodimer associates with one CD3D-CD3E heterodimer, one CD3G-CD3E heterodimer and one CD247 homodimer forming a stable octameric structure. CD3D-CD3E and CD3G-CD3E heterodimers preferentially associate with TR alpha and TR beta chains, respectively. The association of the CD247 homodimer is the last step of TcR assembly in the endoplasmic reticulum and is required for transport to the cell surface.

The protein resides in the cell membrane. Its function is as follows. V region of the variable domain of T cell receptor (TR) beta chain that participates in the antigen recognition. Alpha-beta T cell receptors are antigen specific receptors which are essential to the immune response and are present on the cell surface of T lymphocytes. Recognize peptide-major histocompatibility (MH) (pMH) complexes that are displayed by antigen presenting cells (APC), a prerequisite for efficient T cell adaptive immunity against pathogens. Binding of alpha-beta TR to pMH complex initiates TR-CD3 clustering on the cell surface and intracellular activation of LCK that phosphorylates the ITAM motifs of CD3G, CD3D, CD3E and CD247 enabling the recruitment of ZAP70. In turn ZAP70 phosphorylates LAT, which recruits numerous signaling molecules to form the LAT signalosome. The LAT signalosome propagates signal branching to three major signaling pathways, the calcium, the mitogen-activated protein kinase (MAPK) kinase and the nuclear factor NF-kappa-B (NF-kB) pathways, leading to the mobilization of transcription factors that are critical for gene expression and essential for T cell growth and differentiation. The T cell repertoire is generated in the thymus, by V-(D)-J rearrangement. This repertoire is then shaped by intrathymic selection events to generate a peripheral T cell pool of self-MH restricted, non-autoaggressive T cells. Post-thymic interaction of alpha-beta TR with the pMH complexes shapes TR structural and functional avidity. This chain is T cell receptor beta variable 7-4, found in Homo sapiens (Human).